The sequence spans 132 residues: ATP synthase epsilon chain, chloroplastic (132 aa).

The protein belongs to the ATPase epsilon chain family. As to quaternary structure, F-type ATPases have 2 components, CF(1) - the catalytic core - and CF(0) - the membrane proton channel. CF(1) has five subunits: alpha(3), beta(3), gamma(1), delta(1), epsilon(1). CF(0) has three main subunits: a, b and c.

It is found in the plastid. The protein resides in the chloroplast thylakoid membrane. Its function is as follows. Produces ATP from ADP in the presence of a proton gradient across the membrane. This chain is ATP synthase epsilon chain, chloroplastic, found in Calycanthus floridus var. glaucus (Eastern sweetshrub).